The chain runs to 255 residues: Phosphoribosylformylglycinamidine synthase subunit PurQ (255 aa).

The region spanning 6–255 (TLILRTPGTN…TNAVKWARQV (250 aa)) is the Glutamine amidotransferase type-1 domain. The active-site Nucleophile is C96. Residues H217 and E219 contribute to the active site.

As to quaternary structure, part of the FGAM synthase complex composed of 1 PurL, 1 PurQ and 2 PurS subunits.

The protein localises to the cytoplasm. The enzyme catalyses N(2)-formyl-N(1)-(5-phospho-beta-D-ribosyl)glycinamide + L-glutamine + ATP + H2O = 2-formamido-N(1)-(5-O-phospho-beta-D-ribosyl)acetamidine + L-glutamate + ADP + phosphate + H(+). It catalyses the reaction L-glutamine + H2O = L-glutamate + NH4(+). It participates in purine metabolism; IMP biosynthesis via de novo pathway; 5-amino-1-(5-phospho-D-ribosyl)imidazole from N(2)-formyl-N(1)-(5-phospho-D-ribosyl)glycinamide: step 1/2. Its function is as follows. Part of the phosphoribosylformylglycinamidine synthase complex involved in the purines biosynthetic pathway. Catalyzes the ATP-dependent conversion of formylglycinamide ribonucleotide (FGAR) and glutamine to yield formylglycinamidine ribonucleotide (FGAM) and glutamate. The FGAM synthase complex is composed of three subunits. PurQ produces an ammonia molecule by converting glutamine to glutamate. PurL transfers the ammonia molecule to FGAR to form FGAM in an ATP-dependent manner. PurS interacts with PurQ and PurL and is thought to assist in the transfer of the ammonia molecule from PurQ to PurL. This chain is Phosphoribosylformylglycinamidine synthase subunit PurQ, found in Dehalococcoides mccartyi (strain ATCC BAA-2266 / KCTC 15142 / 195) (Dehalococcoides ethenogenes (strain 195)).